Here is a 637-residue protein sequence, read N- to C-terminus: Probable ATP-binding protein YheS (637 aa).

ABC transporter domains lie at 2–246 (IVFS…AQQQ) and 313–527 (LKME…KQEN). ATP is bound by residues 34–41 (GKNGCGKS) and 345–352 (GRNGAGKS). The disordered stretch occupies residues 523 to 559 (QKQENQTDEAPKENANSAQARKDQKRREAELRAQTQP). The segment covering 542 to 553 (ARKDQKRREAEL) has biased composition (basic and acidic residues).

It belongs to the ABC transporter superfamily. ABCF family. YheS subfamily.

Functionally, genetic data indicate it may be involved in ribosome assembly or function. Ectopic expression exacerbates the cold-sensitive growth phenotype of a bipA deletion. The sequence is that of Probable ATP-binding protein YheS (yheS) from Escherichia coli O6:H1 (strain CFT073 / ATCC 700928 / UPEC).